Consider the following 487-residue polypeptide: 3-octaprenyl-4-hydroxybenzoate carboxy-lyase (487 aa).

Residue N172 coordinates Mn(2+). Residues 175 to 177 (IYR), 189 to 191 (RWL), and 194 to 195 (RG) contribute to the prenylated FMN site. E238 lines the Mn(2+) pocket. D287 (proton donor) is an active-site residue.

It belongs to the UbiD family. In terms of assembly, homohexamer. It depends on prenylated FMN as a cofactor. Requires Mn(2+) as cofactor.

It localises to the cell membrane. It carries out the reaction a 4-hydroxy-3-(all-trans-polyprenyl)benzoate + H(+) = a 2-(all-trans-polyprenyl)phenol + CO2. It functions in the pathway cofactor biosynthesis; ubiquinone biosynthesis. Functionally, catalyzes the decarboxylation of 3-octaprenyl-4-hydroxy benzoate to 2-octaprenylphenol, an intermediate step in ubiquinone biosynthesis. This Thiobacillus denitrificans (strain ATCC 25259 / T1) protein is 3-octaprenyl-4-hydroxybenzoate carboxy-lyase.